The primary structure comprises 586 residues: Kelch-like protein 7 (586 aa).

The BTB domain maps to 44-111 (CDVILMVQER…AYTARISVNS (68 aa)). Positions 146–248 (CLGISVLAEC…SKNFLSKTVQ (103 aa)) constitute a BACK domain. Kelch repeat units lie at residues 294 to 336 (RIAL…FWDN), 337 to 382 (VVYI…AAEG), 383 to 430 (KIYT…EANG), 431 to 481 (LIYV…FVKD), 483 to 528 (IFAV…AVGS), and 530 to 575 (IYVL…CVVD).

In terms of assembly, homodimer. Component of the BCR(KLHL7) E3 ubiquitin ligase complex, at least composed of CUL3 and KLHL7 and RBX1.

The protein localises to the nucleus. It is found in the cytoplasm. It functions in the pathway protein modification; protein ubiquitination. Its function is as follows. Substrate-specific adapter of a BCR (BTB-CUL3-RBX1) E3 ubiquitin ligase complex. The BCR(KLHL7) complex acts by mediating ubiquitination and subsequent degradation of substrate proteins. Probably mediates 'Lys-48'-linked ubiquitination. The polypeptide is Kelch-like protein 7 (Klhl7) (Rattus norvegicus (Rat)).